The following is a 276-amino-acid chain: Protein MGF 360-15R (276 aa).

It belongs to the asfivirus MGF 360 family.

Plays a role in virus cell tropism, and may be required for efficient virus replication in macrophages. This is Protein MGF 360-15R from Ornithodoros (relapsing fever ticks).